A 381-amino-acid chain; its full sequence is GDP-mannose transporter (381 aa).

Topologically, residues 1–40 (MADDKKTNDYTVEMDKLDQGSKNFEAPLPPVQPRSAPNAQ) are cytoplasmic. The chain crosses the membrane as a helical span at residues 41 to 61 (LANNPILPVLAYCGSSIMMTV). At 62–71 (MNKYVLSGTD) the chain is on the lumenal side. The helical transmembrane segment at 72 to 92 (FNLNFLLLCVQSIVCIVAIQT) threads the bilayer. Topologically, residues 93 to 110 (CKASKLITYRDFNADEAK) are cytoplasmic. Residues 111 to 127 (KWFPITLLLIGMIYTGS) traverse the membrane as a helical segment. The Lumenal segment spans residues 128–134 (KALQFLS). The chain crosses the membrane as a helical span at residues 135–151 (IPVYTIFKNLTIILIAY). Topologically, residues 152-160 (GEVLWFGGS) are cytoplasmic. The helical transmembrane segment at 161-182 (VTGLTLFSFGLMVLSSIIAAWA) threads the bilayer. The Lumenal segment spans residues 183 to 200 (DIKHAVESSGDATAKVST). The helical transmembrane segment at 201-221 (LNAGYIWMLINCLCTSSYVLG) threads the bilayer. Topologically, residues 222-233 (MRKRIKLTNFKD) are cytoplasmic. A helical membrane pass occupies residues 234–254 (FDTMFYNNLLSIPVLLVLTFL). Residues 255–274 (MEDWSSANITRNFPPADRNG) are Lumenal-facing. N262 carries N-linked (GlcNAc...) asparagine glycosylation. The helical transmembrane segment at 275–295 (IMFAMILSGLSSVFISYTSAW) threads the bilayer. At 296–303 (CVRVTSST) the chain is on the cytoplasmic side. The helical transmembrane segment at 304–324 (TYSMVGALNKLPIAVSGLIFF) threads the bilayer. The Lumenal segment spans residues 325-327 (DAP). The chain crosses the membrane as a helical span at residues 328-348 (VTFPSVSAIVVGFVSGIVYAV). The Cytoplasmic segment spans residues 349–381 (AKIKQNAKPKTGVLPTSNPVSASSQSMRDSLRS). Positions 362-381 (LPTSNPVSASSQSMRDSLRS) are disordered.

It belongs to the TPT transporter family. SLC35D subfamily. Homooligomer.

Its subcellular location is the golgi apparatus membrane. It is found in the cytoplasmic vesicle membrane. The protein localises to the endoplasmic reticulum membrane. Its function is as follows. Involved in the import of GDP-mannose from the cytoplasm into the Golgi lumen. The chain is GDP-mannose transporter (gmt1) from Aspergillus clavatus (strain ATCC 1007 / CBS 513.65 / DSM 816 / NCTC 3887 / NRRL 1 / QM 1276 / 107).